The sequence spans 449 residues: Doublesex- and mab-3-related transcription factor A2 (449 aa).

The segment at residues 57–104 (CARCRNHGVVSALKGHKRYCRWKDCMCAKCTLIAERQRVMAAQVALRR) is a DNA-binding region (DM). A disordered region spans residues 166-259 (KNQLSGSATP…PSPSSAASRH (94 aa)). Residues 167 to 177 (NQLSGSATPQP) show a composition bias toward polar residues. The segment covering 230–240 (GSVSSIGSDSG) has biased composition (low complexity). One can recognise a DMA domain in the interval 260–295 (MNAIDILTRVFPSHKRSVLELVLQGCGKDVVQAIEQ).

This sequence belongs to the DMRT family.

It is found in the nucleus. In terms of biological role, may be involved in sexual development. The sequence is that of Doublesex- and mab-3-related transcription factor A2 (dmrta2) from Oreochromis niloticus (Nile tilapia).